The sequence spans 332 residues: Probable xyloglucan endotransglucosylase/hydrolase protein 28 (332 aa).

An N-terminal signal peptide occupies residues 1-22 (MGFITRFLVFMSLFTSLVSGFA). Positions 23–223 (LQKLPLIQFD…YKYAPYVSQF (201 aa)) constitute a GH16 domain. Glutamate 108 serves as the catalytic Nucleophile. Catalysis depends on glutamate 112, which acts as the Proton donor. Residues glutamate 112 and 125–127 (QTN) contribute to the xyloglucan site. N-linked (GlcNAc...) asparagine glycosylation is present at asparagine 131. Residues 135–139 (HLGRE), 202–203 (KW), glycine 207, and arginine 282 each bind xyloglucan. An intrachain disulfide couples cysteine 277 to cysteine 290. Residues 313–326 (HGHRRGKHRSRSRL) are compositionally biased toward basic residues. The interval 313–332 (HGHRRGKHRSRSRLARTESI) is disordered.

This sequence belongs to the glycosyl hydrolase 16 family. XTH group 3 subfamily. Contains at least one intrachain disulfide bond essential for its enzymatic activity. Expressed in 7 day old seedlings, roots, rosette leaves, internodes between nodes bearing axillary shoots, nodes bearing flowers, flower buds and siliques.

The protein localises to the secreted. It is found in the cell wall. Its subcellular location is the extracellular space. The protein resides in the apoplast. The catalysed reaction is breaks a beta-(1-&gt;4) bond in the backbone of a xyloglucan and transfers the xyloglucanyl segment on to O-4 of the non-reducing terminal glucose residue of an acceptor, which can be a xyloglucan or an oligosaccharide of xyloglucan.. In terms of biological role, catalyzes xyloglucan endohydrolysis (XEH) and/or endotransglycosylation (XET). Cleaves and religates xyloglucan polymers, an essential constituent of the primary cell wall, and thereby participates in cell wall construction of growing tissues. The polypeptide is Probable xyloglucan endotransglucosylase/hydrolase protein 28 (XTH28) (Arabidopsis thaliana (Mouse-ear cress)).